Consider the following 713-residue polypeptide: Serologically defined colon cancer antigen 8 (713 aa).

Residues serine 4 and serine 28 each carry the phosphoserine modification. Positions glutamine 84 to arginine 103 are disordered. Positions isoleucine 129–glutamate 175 form a coiled coil. The interval glutamate 194 to lysine 215 is disordered. Residues threonine 201 to aspartate 212 show a composition bias toward basic and acidic residues. Residues alanine 216–cysteine 713 form a sufficient for homodimerization region. Coiled coils occupy residues leucine 223 to alanine 273 and glutamate 348 to serine 707. Positions histidine 533 to cysteine 713 are mediates interaction with OFD1.

In terms of assembly, homodimer. Interacts with OFD1; the interaction is direct. Interacts with FAM161A. Interacts with RABEP2, ERC1 and CEP131. Expressed in thymus, prostate, testis, ovary, small intestine, colon, mucosa, colon and renal cancer tumors.

It localises to the cytoplasm. The protein localises to the cytoskeleton. The protein resides in the microtubule organizing center. Its subcellular location is the centrosome. It is found in the centriole. It localises to the cilium basal body. The protein localises to the cell junction. Plays a role in the establishment of cell polarity and epithelial lumen formation. Also plays an essential role in ciliogenesis and subsequent Hedgehog signaling pathway that requires the presence of intact primary cilia for pathway activation. Mechanistically, interacts with and mediates RABEP2 centrosomal localization which is critical for ciliogenesis. The sequence is that of Serologically defined colon cancer antigen 8 (SDCCAG8) from Homo sapiens (Human).